A 322-amino-acid polypeptide reads, in one-letter code: Eukaryotic translation initiation factor 3 subunit I (322 aa).

5 WD repeats span residues 4 to 43 (GHER…RLGT), 46 to 85 (GHQG…IIAS), 141 to 180 (MTES…KVVD), 184 to 223 (DHTA…CLKT), and 281 to 322 (GHFG…NIFE).

Belongs to the eIF-3 subunit I family. As to quaternary structure, component of the eukaryotic translation initiation factor 3 (eIF-3) complex. The eIF-3 complex interacts with pix.

Its subcellular location is the cytoplasm. In terms of biological role, component of the eukaryotic translation initiation factor 3 (eIF-3) complex, which is involved in protein synthesis of a specialized repertoire of mRNAs and, together with other initiation factors, stimulates binding of mRNA and methionyl-tRNAi to the 40S ribosome. The eIF-3 complex specifically targets and initiates translation of a subset of mRNAs involved in cell proliferation. This is Eukaryotic translation initiation factor 3 subunit I from Drosophila ananassae (Fruit fly).